The following is a 1340-amino-acid chain: Serine/threonine-protein phosphatase 7 long form homolog (1340 aa).

Residues D660 and H662 each coordinate Mn(2+). H722 serves as the catalytic Proton donor. Residue H773 participates in Mn(2+) binding. Disordered stretches follow at residues 788–814, 1012–1093, 1196–1218, and 1266–1340; these read QERNRKRKRTQKKQTDNTVLDTEDRSE, KSMD…SRTR, TDGAENLEPSTSKLNYSEPSEDI, and FTNL…DMDS. Basic residues predominate over residues 790 to 799; that stretch reads RNRKRKRTQK. Acidic residues predominate over residues 1018–1027; sequence EQMEVDEKDD. Residues 1049–1080 are compositionally biased toward basic and acidic residues; the sequence is GDRDMVDFSDKTENGSKEADHSETAEISKDLS. The span at 1203–1213 shows a compositional bias: polar residues; the sequence is EPSTSKLNYSE. Composition is skewed to basic and acidic residues over residues 1266-1289 and 1318-1328; these read FTNLTKPSHDKGYGESADKPERVI and DSVDSKNKGSL.

The protein belongs to the PPP phosphatase family. PP-7 subfamily. Mn(2+) is required as a cofactor. In terms of tissue distribution, expressed in root tips, the shoot apical meristem (SAM), leaf vasculature, hydathodes and mature flowers.

Its subcellular location is the nucleus. The catalysed reaction is O-phospho-L-seryl-[protein] + H2O = L-seryl-[protein] + phosphate. The enzyme catalyses O-phospho-L-threonyl-[protein] + H2O = L-threonyl-[protein] + phosphate. In terms of biological role, maybe required to maintain cell division activity in meristematic cells. In Arabidopsis thaliana (Mouse-ear cress), this protein is Serine/threonine-protein phosphatase 7 long form homolog.